We begin with the raw amino-acid sequence, 218 residues long: Ras-related protein Rab-11B (218 aa).

N-acetylglycine is present on G2. The residue at position 4 (R4) is a Citrulline. The GTP site is built by S20, G21, G23, K24, S25, N26, N37, L38, S40, S42, and T43. Residue S25 participates in Mg(2+) binding. The short motif at 36 to 47 is the Switch 1 element; it reads FNLESKSTIGVE. 2 residues coordinate Mg(2+): T43 and D66. Residues 67 to 86 carry the Switch 2 motif; the sequence is TAGQERYRAITSAYYRGAVG. Positions 69, 124, 125, 127, 155, and 156 each coordinate GTP. The interval 184–218 is disordered; it reads RAAHDESPGNNVVDISVPPTTDGQRPNKLQCCQSL. 2 S-geranylgeranyl cysteine lipidation sites follow: C214 and C215. At C215 the chain carries Cysteine methyl ester. Positions 216–218 are cleaved as a propeptide — removed in mature form; it reads QSL.

Belongs to the small GTPase superfamily. Rab family. In terms of assembly, interacts with KCNMA1. Interacts with RAB11FIP1, RAB11FIP2, RAB11FIP3 and RAB11FIP4. May interact with TBC1D14. Interacts with ATP6V1E1. Interacts with PI4KB. Interacts (GDP-bound form) with ZFYVE27. Interacts (GDP-bound form) with KIF5A in a ZFYVE27-dependent manner. Interacts with RELCH. Interacts (in GTP-bound form) with TBC1D8B (via domain Rab-GAP TBC). Forms a complex containing RAB11B, ASAP1, Rabin8/RAB3IP, RAP11FIP3 and ARF4. Interacts with WDR44. Requires Mg(2+) as cofactor. Post-translationally, citrullinated by PADI4. Abundantly expressed in brain, heart and testis. Also detected in kidney and pancreatic islets.

Its subcellular location is the recycling endosome membrane. The protein localises to the cytoplasmic vesicle. It is found in the secretory vesicle. The protein resides in the synaptic vesicle membrane. It localises to the phagosome membrane. It carries out the reaction GTP + H2O = GDP + phosphate + H(+). Its activity is regulated as follows. Regulated by guanine nucleotide exchange factors (GEFs) which promote the exchange of bound GDP for free GTP. Regulated by GTPase activating proteins (GAPs) which increase the GTP hydrolysis activity. Inhibited by GDP dissociation inhibitors (GDIs) which prevent Rab-GDP dissociation. The small GTPases Rab are key regulators of intracellular membrane trafficking, from the formation of transport vesicles to their fusion with membranes. Rabs cycle between an inactive GDP-bound form and an active GTP-bound form that is able to recruit to membranes different set of downstream effectors directly responsible for vesicle formation, movement, tethering and fusion. The small Rab GTPase RAB11B plays a role in endocytic recycling, regulating apical recycling of several transmembrane proteins including cystic fibrosis transmembrane conductance regulator/CFTR, epithelial sodium channel/ENaC, potassium voltage-gated channel, and voltage-dependent L-type calcium channel. May also regulate constitutive and regulated secretion, like insulin granule exocytosis. Required for melanosome transport and release from melanocytes. Also regulates V-ATPase intracellular transport in response to extracellular acidosis. Promotes Rabin8/RAB3IP preciliary vesicular trafficking to mother centriole by forming a ciliary targeting complex containing Rab11, ASAP1, Rabin8/RAB3IP, RAB11FIP3 and ARF4, thereby regulating ciliogenesis initiation. On the contrary, upon LPAR1 receptor signaling pathway activation, interaction with phosphorylated WDR44 prevents Rab11-RAB3IP-RAB11FIP3 complex formation and cilia growth. The polypeptide is Ras-related protein Rab-11B (Mus musculus (Mouse)).